A 605-amino-acid polypeptide reads, in one-letter code: UvrABC system protein C (605 aa).

The 79-residue stretch at 14 to 92 folds into the GIY-YIG domain; sequence QSCGVYKMVG…IKSLKPLYNI (79 aa). Residues 202 to 237 form the UVR domain; the sequence is KEVKEQLLFTMRKCSSEENYELAAIYRDRVKFLEQI.

This sequence belongs to the UvrC family. Interacts with UvrB in an incision complex.

It is found in the cytoplasm. Its function is as follows. The UvrABC repair system catalyzes the recognition and processing of DNA lesions. UvrC both incises the 5' and 3' sides of the lesion. The N-terminal half is responsible for the 3' incision and the C-terminal half is responsible for the 5' incision. The polypeptide is UvrABC system protein C (Wolbachia sp. subsp. Drosophila simulans (strain wRi)).